A 484-amino-acid chain; its full sequence is ATP synthase subunit beta (484 aa).

156–163 (GGAGVGKT) is a binding site for ATP.

It belongs to the ATPase alpha/beta chains family. In terms of assembly, F-type ATPases have 2 components, CF(1) - the catalytic core - and CF(0) - the membrane proton channel. CF(1) has five subunits: alpha(3), beta(3), gamma(1), delta(1), epsilon(1). CF(0) has three main subunits: a(1), b(2) and c(9-12). The alpha and beta chains form an alternating ring which encloses part of the gamma chain. CF(1) is attached to CF(0) by a central stalk formed by the gamma and epsilon chains, while a peripheral stalk is formed by the delta and b chains.

The protein resides in the cell inner membrane. It catalyses the reaction ATP + H2O + 4 H(+)(in) = ADP + phosphate + 5 H(+)(out). Its function is as follows. Produces ATP from ADP in the presence of a proton gradient across the membrane. The catalytic sites are hosted primarily by the beta subunits. This chain is ATP synthase subunit beta, found in Rhizorhabdus wittichii (strain DSM 6014 / CCUG 31198 / JCM 15750 / NBRC 105917 / EY 4224 / RW1) (Sphingomonas wittichii).